A 122-amino-acid chain; its full sequence is Large ribosomal subunit protein bL12 (122 aa).

It belongs to the bacterial ribosomal protein bL12 family. Homodimer. Part of the ribosomal stalk of the 50S ribosomal subunit. Forms a multimeric L10(L12)X complex, where L10 forms an elongated spine to which 2 to 4 L12 dimers bind in a sequential fashion. Binds GTP-bound translation factors.

In terms of biological role, forms part of the ribosomal stalk which helps the ribosome interact with GTP-bound translation factors. Is thus essential for accurate translation. The polypeptide is Large ribosomal subunit protein bL12 (Actinobacillus pleuropneumoniae serotype 5b (strain L20)).